The following is a 325-amino-acid chain: Zinc metalloproteinase/disintegrin (325 aa).

The propeptide occupies 1 to 39 (KYENVEKGDEAPKKCGVTHTNLESDEPIEKASQLFGTSE). Position 40 is a pyrrolidone carboxylic acid (glutamine 40). A Peptidase M12B domain is found at 46–242 (RHIELVIVAD…HNPQRILNEP (197 aa)). Histidine 182 provides a ligand contact to Zn(2+). The active site involves glutamate 183. Residues histidine 186 and histidine 192 each coordinate Zn(2+). 2 disulfides stabilise this stretch: cysteine 197-cysteine 221 and cysteine 199-cysteine 204. Residues 243–257 (LRTDTVSTPVYGNVL) constitute a propeptide that is removed on maturation. A Disintegrin domain is found at 250-322 (TPVYGNVLQN…SECESNPWNF (73 aa)). Glutamine 258 is modified (pyrrolidone carboxylic acid). Intrachain disulfides connect cysteine 264–cysteine 287, cysteine 278–cysteine 284, cysteine 283–cysteine 308, and cysteine 296–cysteine 315. Positions 300-302 (RGD) match the Cell attachment site motif.

The protein belongs to the venom metalloproteinase (M12B) family. P-II subfamily. P-IIe sub-subfamily. In terms of assembly, heterodimer of bitisgabonin and gabonin-1 (bitisgabonin-1) or gabonin-2 (bitisgabonin-2); disulfide-linked. Zn(2+) serves as cofactor. Expressed by the venom gland.

It is found in the secreted. Its function is as follows. Impairs hemostasis in the envenomed animal. In dimer with gabonin-1 (bitisgabonin-1), is a potent inhibitor of the adhesion of the RGD-dependent integrin alpha-5/beta-1 (ITGA5/ITGB1) to immobilized fibronectin. Functionally, in dimer with gabonin-2 (bitisgabonin-2), preferentially inhibits the adhesion of the alpha-4/beta-1 (ITGA4/ITGB1) and alpha-9/beta-1 (ITGA9/ITGB1) integrins to VCAM-1 and also acts as a strong antagonist of alpha-5/beta-1 (ITGA5/ITGB1). The polypeptide is Zinc metalloproteinase/disintegrin (Bitis gabonica (Gaboon adder)).